The primary structure comprises 259 residues: Phosphatidylinositol transfer protein 2 (259 aa).

The stretch at 231–259 (LTIEDIRKIEEETKAELAKKLEENKAANK) forms a coiled coil.

The protein belongs to the PtdIns transfer protein family. PI transfer class IIA subfamily.

It localises to the cytoplasm. The protein localises to the golgi apparatus. Its function is as follows. Catalyzes the transfer of PtdIns and phosphatidylcholine between membranes. This chain is Phosphatidylinositol transfer protein 2 (pitB), found in Dictyostelium discoideum (Social amoeba).